A 281-amino-acid polypeptide reads, in one-letter code: Pantothenate synthetase (281 aa).

31–38 (MGNLHAGH) contacts ATP. His38 functions as the Proton donor in the catalytic mechanism. Gln62 contributes to the (R)-pantoate binding site. Gln62 is a beta-alanine binding site. Residue 150–153 (GKKD) coordinates ATP. A (R)-pantoate-binding site is contributed by Gln156. Residues Val179 and 187 to 190 (MSSR) contribute to the ATP site.

This sequence belongs to the pantothenate synthetase family. Homodimer.

The protein resides in the cytoplasm. It carries out the reaction (R)-pantoate + beta-alanine + ATP = (R)-pantothenate + AMP + diphosphate + H(+). Its pathway is cofactor biosynthesis; (R)-pantothenate biosynthesis; (R)-pantothenate from (R)-pantoate and beta-alanine: step 1/1. Catalyzes the condensation of pantoate with beta-alanine in an ATP-dependent reaction via a pantoyl-adenylate intermediate. This Xylella fastidiosa (strain M12) protein is Pantothenate synthetase.